The following is a 105-amino-acid chain: Pyrimidine/purine nucleoside phosphorylase (105 aa).

Belongs to the nucleoside phosphorylase PpnP family.

It catalyses the reaction a purine D-ribonucleoside + phosphate = a purine nucleobase + alpha-D-ribose 1-phosphate. It carries out the reaction adenosine + phosphate = alpha-D-ribose 1-phosphate + adenine. The catalysed reaction is cytidine + phosphate = cytosine + alpha-D-ribose 1-phosphate. The enzyme catalyses guanosine + phosphate = alpha-D-ribose 1-phosphate + guanine. It catalyses the reaction inosine + phosphate = alpha-D-ribose 1-phosphate + hypoxanthine. It carries out the reaction thymidine + phosphate = 2-deoxy-alpha-D-ribose 1-phosphate + thymine. The catalysed reaction is uridine + phosphate = alpha-D-ribose 1-phosphate + uracil. The enzyme catalyses xanthosine + phosphate = alpha-D-ribose 1-phosphate + xanthine. In terms of biological role, catalyzes the phosphorolysis of diverse nucleosides, yielding D-ribose 1-phosphate and the respective free bases. Can use uridine, adenosine, guanosine, cytidine, thymidine, inosine and xanthosine as substrates. Also catalyzes the reverse reactions. The polypeptide is Pyrimidine/purine nucleoside phosphorylase (Ralstonia nicotianae (strain ATCC BAA-1114 / GMI1000) (Ralstonia solanacearum)).